The chain runs to 229 residues: Transcriptional regulatory protein CreB (229 aa).

The Response regulatory domain maps to 5 to 119 (TVWLVEDEQG…EVCARVRTLL (115 aa)). At Asp-54 the chain carries 4-aspartylphosphate. The segment at residues 129-228 (SPVIRIGHFE…HRGMGYSLRG (100 aa)) is a DNA-binding region (ompR/PhoB-type).

Post-translationally, phosphorylated by CreC.

The protein resides in the cytoplasm. Its function is as follows. Member of the two-component regulatory system CreC/CreB involved in catabolic regulation. This Escherichia coli (strain K12) protein is Transcriptional regulatory protein CreB (creB).